Consider the following 80-residue polypeptide: Sec-independent protein translocase protein TatA (80 aa).

The chain crosses the membrane as a helical span at residues 1 to 21 (MGQIGIWQILIIALVILVLFG). A disordered region spans residues 38–80 (SFKKGLNEEDKPAEPAAKIEGPSHEAKPAGEAAKDPRPADKQG). Positions 58–80 (GPSHEAKPAGEAAKDPRPADKQG) are enriched in basic and acidic residues.

Belongs to the TatA/E family. As to quaternary structure, the Tat system comprises two distinct complexes: a TatABC complex, containing multiple copies of TatA, TatB and TatC subunits, and a separate TatA complex, containing only TatA subunits. Substrates initially bind to the TatABC complex, which probably triggers association of the separate TatA complex to form the active translocon.

It is found in the cell inner membrane. Part of the twin-arginine translocation (Tat) system that transports large folded proteins containing a characteristic twin-arginine motif in their signal peptide across membranes. TatA could form the protein-conducting channel of the Tat system. This Erythrobacter litoralis (strain HTCC2594) protein is Sec-independent protein translocase protein TatA.